A 478-amino-acid chain; its full sequence is Zinc metalloproteinase/disintegrin (478 aa).

The N-terminal stretch at 1 to 20 (MIQVLLVTICLAVFPYQGSS) is a signal peptide. The propeptide occupies 21–194 (KTLKSGNVND…KASQLNLTPE (174 aa)). The residue at position 195 (glutamine 195) is a Pyrrolidone carboxylic acid. The Peptidase M12B domain maps to 201–397 (RYIELVIVAD…RNPQCILNQP (197 aa)). Ca(2+) contacts are provided by glutamate 204 and aspartate 288. Cystine bridges form between cysteine 312–cysteine 392, cysteine 352–cysteine 376, and cysteine 354–cysteine 359. Histidine 337 provides a ligand contact to Zn(2+). Glutamate 338 is a catalytic residue. Positions 341 and 347 each coordinate Zn(2+). Residues cysteine 392 and asparagine 395 each coordinate Ca(2+). Positions 398–413 (LRTDTVSTPVSGNELL) are excised as a propeptide. In terms of domain architecture, Disintegrin spans 405–478 (TPVSGNELLQ…SDCPRNPYKD (74 aa)). Cystine bridges form between cysteine 420/cysteine 443, cysteine 434/cysteine 440, cysteine 439/cysteine 464, and cysteine 452/cysteine 471. Residues 456-458 (VGD) carry the Cell attachment site; atypical (VGD) motif.

It belongs to the venom metalloproteinase (M12B) family. P-II subfamily. P-IIe sub-subfamily. In terms of assembly, monomer (metalloproteinase). Heterodimer; disulfide-linked (disintegrin). Requires Zn(2+) as cofactor. As to expression, expressed by the venom gland.

It localises to the secreted. Its activity is regulated as follows. Fibrinolytic and caseinolytic activities are inhibited by Cd(2+), Cu(2+) and Co(2+) ions. Not inhibited by Mg(2+), Ca(2+) and Ba(2+). Also inhibited by EDTA, EGTA and 1,10-phenanthroline. Its function is as follows. Fibrinolytic and fibrinogenolytic metalloproteinase that hydrolyzes the Aalpha-chain and more slowly the Bbeta-chain of fibrin and fibrinogen. Its fibrinolytic activity is direct, without any plasminogen activation. Also hydrolyzes casein and B-chain of oxidized insulin. Inhibits ADP-induced and collagen-induced platelet aggregation. Shows low hemorrhagic activity. Cleaves the plasma proteinase inhibitors alpha(2)-macroglobulin (A2M) and pregnancy zone protein (PZP), and is inhibited by them. The metalloprotease has no strict P1-P1' specificity requirement. Hydrolysis at sites with a Pro residue at P1 is observed with bradykinin, substance P, PZP and alpha chain fibrinogen (FGA). In terms of biological role, poor inhibitor of platelet aggregation. The disintegrin inhibits the adhesion of the alpha-4/beta-1 (ITGA4/ITGB1) integrin to VCAM-1. Inhibition on alpha-2b/beta-3 (ITGA2B/ITGB3) is low. The polypeptide is Zinc metalloproteinase/disintegrin (Macrovipera lebetinus (Levantine viper)).